Consider the following 138-residue polypeptide: Large ribosomal subunit protein uL16 (138 aa).

The segment covering 1-13 (MLQPARRKYRKEQ) has biased composition (basic residues). A disordered region spans residues 1-22 (MLQPARRKYRKEQKGRNTGVAT).

This sequence belongs to the universal ribosomal protein uL16 family. In terms of assembly, part of the 50S ribosomal subunit.

In terms of biological role, binds 23S rRNA and is also seen to make contacts with the A and possibly P site tRNAs. This is Large ribosomal subunit protein uL16 from Paracidovorax citrulli (strain AAC00-1) (Acidovorax citrulli).